A 228-amino-acid chain; its full sequence is PKHD-type hydroxylase xcc-b100_1388 (228 aa).

One can recognise a Fe2OG dioxygenase domain in the interval 78-180; sequence RIYPPLFNRY…RVASFFWIQS (103 aa). Fe cation-binding residues include His96, Asp98, and His161. Residue Arg171 participates in 2-oxoglutarate binding.

Fe(2+) is required as a cofactor. Requires L-ascorbate as cofactor.

The sequence is that of PKHD-type hydroxylase xcc-b100_1388 from Xanthomonas campestris pv. campestris (strain B100).